The chain runs to 194 residues: Inosine triphosphate pyrophosphatase (194 aa).

Residue 10–15 participates in ITP binding; the sequence is TGNANK. A Mg(2+)-binding site is contributed by glutamate 41. ITP contacts are provided by residues lysine 54, 72-73, lysine 89, 147-150, lysine 172, and 177-178; these read DT, FGWD, and QR.

It belongs to the HAM1 NTPase family. In terms of assembly, homodimer. It depends on Mg(2+) as a cofactor. The cofactor is Mn(2+).

Its subcellular location is the cytoplasm. It is found in the nucleus. It carries out the reaction ITP + H2O = IMP + diphosphate + H(+). It catalyses the reaction dITP + H2O = dIMP + diphosphate + H(+). The catalysed reaction is XTP + H2O = XMP + diphosphate + H(+). Functionally, pyrophosphatase that hydrolyzes non-canonical purine nucleotides such as inosine triphosphate (ITP), deoxyinosine triphosphate (dITP) or xanthosine 5'-triphosphate (XTP) to their respective monophosphate derivatives. The enzyme does not distinguish between the deoxy- and ribose forms. Probably excludes non-canonical purines from RNA and DNA precursor pools, thus preventing their incorporation into RNA and DNA and avoiding chromosomal lesions. The sequence is that of Inosine triphosphate pyrophosphatase from Kluyveromyces lactis (strain ATCC 8585 / CBS 2359 / DSM 70799 / NBRC 1267 / NRRL Y-1140 / WM37) (Yeast).